The primary structure comprises 345 residues: MTVVIPIGRGRSPAGASRERVGVLLVNLGTPDTADARGLRVYLKEFLSDPRVIEKQGLVWKLALNGVILNTRPRRKARDYLKIWNTEQNESPLKTITRAQSDKLAAAIADHGHVVVDWAMRYGNPSMRSRIAALTAQGCDRLLVVPLYPQYSAATSATVCDEAFRVLGEMRAQPTLRVTPPYYDDPDYIDALAVSIERHLASLSFTPEIIMASFHGMPQAYIDKGDPYQAQCAATTEALRKRMGLDASKLMLTFQSRFGFDQWLQPYTDKTVEKLAKDGVKRLAVVTPGFSADCLETLEEIAQENAEIFRHNGGEEFSAIPCLNDSDSGMDVIRKLVLRELQGWI.

The Fe cation site is built by His215 and Glu296.

Belongs to the ferrochelatase family.

The protein localises to the cytoplasm. It carries out the reaction heme b + 2 H(+) = protoporphyrin IX + Fe(2+). It functions in the pathway porphyrin-containing compound metabolism; protoheme biosynthesis; protoheme from protoporphyrin-IX: step 1/1. Catalyzes the ferrous insertion into protoporphyrin IX. In Nitrobacter hamburgensis (strain DSM 10229 / NCIMB 13809 / X14), this protein is Ferrochelatase.